A 216-amino-acid polypeptide reads, in one-letter code: 2-phospho-L-lactate guanylyltransferase (216 aa).

This sequence belongs to the CofC family. As to quaternary structure, homodimer.

The enzyme catalyses (2S)-2-phospholactate + GTP + H(+) = (2S)-lactyl-2-diphospho-5'-guanosine + diphosphate. It participates in cofactor biosynthesis; coenzyme F420 biosynthesis. Guanylyltransferase that catalyzes the activation of (2S)-2-phospholactate (2-PL) as (2S)-lactyl-2-diphospho-5'-guanosine, via the condensation of 2-PL with GTP. It is involved in the biosynthesis of coenzyme F420, a hydride carrier cofactor. The polypeptide is 2-phospho-L-lactate guanylyltransferase (Methanocaldococcus infernus (strain DSM 11812 / JCM 15783 / ME)).